We begin with the raw amino-acid sequence, 152 residues long: Ribosome maturation factor RimP (152 aa).

The protein belongs to the RimP family.

Its subcellular location is the cytoplasm. Functionally, required for maturation of 30S ribosomal subunits. This is Ribosome maturation factor RimP from Desulfatibacillum aliphaticivorans.